We begin with the raw amino-acid sequence, 263 residues long: MPEGPEIRRAADNLEAAIKGKPLTDVWFAFPQLKSYQSQLIGQHVTHVETRGKALLTHFSNGLTLYSHNQLYGVWRVVDTGEEPQTTRVLRVKLQTADKTILLYSASDIEMLTPEQLTTHPFLQRVGPDVLDPNLTPEVVKERLLSPRFRNRQFAGLLLDQAFLAGLGNYLRVEILWQVGLTGNHKAKDLSAAQLDALAHALLDIPRLSYATRGQVDENKHHGALFRFKVFHRDGEPCERCGSIIEKTTLSSRPFYWCPGCQH.

Pro2 serves as the catalytic Schiff-base intermediate with DNA. Residue Glu3 is the Proton donor of the active site. Lys53 functions as the Proton donor; for beta-elimination activity in the catalytic mechanism. Residues Gln70, Arg125, and Asn169 each contribute to the DNA site. The FPG-type zinc finger occupies 229–263 (KVFHRDGEPCERCGSIIEKTTLSSRPFYWCPGCQH). Arg253 acts as the Proton donor; for delta-elimination activity in catalysis.

The protein belongs to the FPG family. Requires Zn(2+) as cofactor.

The enzyme catalyses 2'-deoxyribonucleotide-(2'-deoxyribose 5'-phosphate)-2'-deoxyribonucleotide-DNA = a 3'-end 2'-deoxyribonucleotide-(2,3-dehydro-2,3-deoxyribose 5'-phosphate)-DNA + a 5'-end 5'-phospho-2'-deoxyribonucleoside-DNA + H(+). Its function is as follows. Involved in base excision repair of DNA damaged by oxidation or by mutagenic agents. Acts as a DNA glycosylase that recognizes and removes damaged bases. Has a preference for oxidized pyrimidines, such as thymine glycol, 5,6-dihydrouracil and 5,6-dihydrothymine. Has AP (apurinic/apyrimidinic) lyase activity and introduces nicks in the DNA strand. Cleaves the DNA backbone by beta-delta elimination to generate a single-strand break at the site of the removed base with both 3'- and 5'-phosphates. In Escherichia coli O17:K52:H18 (strain UMN026 / ExPEC), this protein is Endonuclease 8.